Consider the following 442-residue polypeptide: MLSFLKAPANAPLITDKHEVDARYRYWRRHILITIWLGYALFYFTRKSFNAAAPEILASGILTRSDIGLLATLFYITYGVSKFVSGIVSDRSNARYFMGIGLIATGVVNILFGFSTSLWAFALLWALNAFFQGFGSPVCARLLTAWYSRTERGGWWALWNTAHNVGGALIPLVMAAVALHYGWRVGMMVAGLLAIGVGMVLCWRLRDRPQAIGLPPVGDWRHDALEVAQQQEGAGLSRKEILAKYVLLNPYIWLLSLCYVLVYVVRAAINDWGNLYMSETLGVDLVTANTAVSMFELGGFIGALVAGWGSDKLFNGNRGPMNLIFAAGILLSVGSLWLMPFASYVMQAACFFTTGFFVFGPQMLIGMAAAECSHKEAAGAATGFVGLFAYLGASLSGWPLAKVLEIWHWTGFFAVIAIAAGISALLLLPFLNAQAPRETHEA.

At 1–30 the chain is on the cytoplasmic side; it reads MLSFLKAPANAPLITDKHEVDARYRYWRRH. A helical membrane pass occupies residues 31-51; the sequence is ILITIWLGYALFYFTRKSFNA. Topologically, residues 52–66 are periplasmic; sequence AAPEILASGILTRSD. The helical transmembrane segment at 67–87 threads the bilayer; the sequence is IGLLATLFYITYGVSKFVSGI. At 88 to 95 the chain is on the cytoplasmic side; it reads VSDRSNAR. The helical transmembrane segment at 96-118 threads the bilayer; it reads YFMGIGLIATGVVNILFGFSTSL. Over 119–121 the chain is Periplasmic; it reads WAF. A helical transmembrane segment spans residues 122–144; the sequence is ALLWALNAFFQGFGSPVCARLLT. The Cytoplasmic portion of the chain corresponds to 145–162; the sequence is AWYSRTERGGWWALWNTA. A helical transmembrane segment spans residues 163–183; the sequence is HNVGGALIPLVMAAVALHYGW. A topological domain (periplasmic) is located at residue Arg-184. The helical transmembrane segment at 185–205 threads the bilayer; the sequence is VGMMVAGLLAIGVGMVLCWRL. The Cytoplasmic segment spans residues 206-244; it reads RDRPQAIGLPPVGDWRHDALEVAQQQEGAGLSRKEILAK. The chain crosses the membrane as a helical span at residues 245–265; it reads YVLLNPYIWLLSLCYVLVYVV. At 266–289 the chain is on the periplasmic side; sequence RAAINDWGNLYMSETLGVDLVTAN. The chain crosses the membrane as a helical span at residues 290 to 310; that stretch reads TAVSMFELGGFIGALVAGWGS. Residues 311-322 are Cytoplasmic-facing; that stretch reads DKLFNGNRGPMN. A helical transmembrane segment spans residues 323 to 343; the sequence is LIFAAGILLSVGSLWLMPFAS. At 344–347 the chain is on the periplasmic side; sequence YVMQ. Residues 348–368 form a helical membrane-spanning segment; it reads AACFFTTGFFVFGPQMLIGMA. Topologically, residues 369–379 are cytoplasmic; sequence AAECSHKEAAG. A helical membrane pass occupies residues 380-400; sequence AATGFVGLFAYLGASLSGWPL. Over 401–410 the chain is Periplasmic; that stretch reads AKVLEIWHWT. A helical membrane pass occupies residues 411-431; that stretch reads GFFAVIAIAAGISALLLLPFL. Over 432–442 the chain is Cytoplasmic; it reads NAQAPRETHEA.

Belongs to the major facilitator superfamily. Organophosphate:Pi antiporter (OPA) (TC 2.A.1.4) family.

Its subcellular location is the cell inner membrane. Part of the UhpABC signaling cascade that controls the expression of the hexose phosphate transporter UhpT. UhpC senses external glucose-6-phosphate and interacts with the histidine kinase UhpB, leading to the stimulation of the autokinase activity of UhpB. The polypeptide is Membrane sensor protein UhpC (uhpC) (Salmonella typhimurium (strain LT2 / SGSC1412 / ATCC 700720)).